We begin with the raw amino-acid sequence, 235 residues long: tRNA (guanine-N(1)-)-methyltransferase (235 aa).

S-adenosyl-L-methionine-binding positions include Gly-112 and 132 to 137 (IGDYVL).

The protein belongs to the RNA methyltransferase TrmD family. Homodimer.

The protein localises to the cytoplasm. It catalyses the reaction guanosine(37) in tRNA + S-adenosyl-L-methionine = N(1)-methylguanosine(37) in tRNA + S-adenosyl-L-homocysteine + H(+). Its function is as follows. Specifically methylates guanosine-37 in various tRNAs. The sequence is that of tRNA (guanine-N(1)-)-methyltransferase from Cytophaga hutchinsonii (strain ATCC 33406 / DSM 1761 / CIP 103989 / NBRC 15051 / NCIMB 9469 / D465).